A 382-amino-acid chain; its full sequence is Homeobox protein bagpipe (382 aa).

Disordered regions lie at residues 27–66 (NDIL…SKSP), 144–178 (TSND…KKRS), and 314–382 (QPIP…VEID). Positions 48–62 (EPEKLKPSSDRERSI) are enriched in basic and acidic residues. Positions 158–170 (SSPSESPLSHDGS) are enriched in low complexity. Positions 175–234 (KKRSRAAFSHAQVFELERRFAQQRYLSGPERSEMAKSLRLTETQVKIWFQNRRYKTKRKQ) form a DNA-binding region, homeobox. Residues 321–335 (QSSSFVTASSASSSP) show a composition bias toward low complexity. Acidic residues predominate over residues 373–382 (EDVDENVEID).

Belongs to the NK-3 homeobox family. As to expression, is expressed in a segmented pattern in visceral muscle and in a subset of cardiac muscles. Loss of activity results in segmental gaps in midgut visceral muscle.

It localises to the nucleus. Functionally, involved in the determination of cell fates in the dorsal mesoderm. The protein is Homeobox protein bagpipe (bap) of Drosophila melanogaster (Fruit fly).